A 382-amino-acid polypeptide reads, in one-letter code: 1-deoxy-D-xylulose 5-phosphate reductoisomerase (382 aa).

The NADPH site is built by Thr-10, Gly-11, Ser-12, Ile-13, Gly-36, and Asn-122. Lys-123 contacts 1-deoxy-D-xylulose 5-phosphate. Position 124 (Glu-124) interacts with NADPH. Asp-148 contacts Mn(2+). Positions 149, 150, 174, and 197 each coordinate 1-deoxy-D-xylulose 5-phosphate. Glu-150 provides a ligand contact to Mn(2+). Gly-203 provides a ligand contact to NADPH. 4 residues coordinate 1-deoxy-D-xylulose 5-phosphate: Ser-210, Asn-215, Lys-216, and Glu-219. Glu-219 is a Mn(2+) binding site.

Belongs to the DXR family. It depends on Mg(2+) as a cofactor. Requires Mn(2+) as cofactor.

The enzyme catalyses 2-C-methyl-D-erythritol 4-phosphate + NADP(+) = 1-deoxy-D-xylulose 5-phosphate + NADPH + H(+). Its pathway is isoprenoid biosynthesis; isopentenyl diphosphate biosynthesis via DXP pathway; isopentenyl diphosphate from 1-deoxy-D-xylulose 5-phosphate: step 1/6. Catalyzes the NADPH-dependent rearrangement and reduction of 1-deoxy-D-xylulose-5-phosphate (DXP) to 2-C-methyl-D-erythritol 4-phosphate (MEP). In Chlorobium limicola (strain DSM 245 / NBRC 103803 / 6330), this protein is 1-deoxy-D-xylulose 5-phosphate reductoisomerase.